Consider the following 294-residue polypeptide: Probable 2-(5''-triphosphoribosyl)-3'-dephosphocoenzyme-A synthase (294 aa).

It belongs to the CitG/MdcB family.

The catalysed reaction is 3'-dephospho-CoA + ATP = 2'-(5''-triphospho-alpha-D-ribosyl)-3'-dephospho-CoA + adenine. This Streptococcus pyogenes serotype M5 (strain Manfredo) protein is Probable 2-(5''-triphosphoribosyl)-3'-dephosphocoenzyme-A synthase.